The chain runs to 964 residues: Glycine dehydrogenase (decarboxylating) (964 aa).

Lysine 711 bears the N6-(pyridoxal phosphate)lysine mark.

The protein belongs to the GcvP family. The glycine cleavage system is composed of four proteins: P, T, L and H. It depends on pyridoxal 5'-phosphate as a cofactor.

The catalysed reaction is N(6)-[(R)-lipoyl]-L-lysyl-[glycine-cleavage complex H protein] + glycine + H(+) = N(6)-[(R)-S(8)-aminomethyldihydrolipoyl]-L-lysyl-[glycine-cleavage complex H protein] + CO2. In terms of biological role, the glycine cleavage system catalyzes the degradation of glycine. The P protein binds the alpha-amino group of glycine through its pyridoxal phosphate cofactor; CO(2) is released and the remaining methylamine moiety is then transferred to the lipoamide cofactor of the H protein. This Prochlorococcus marinus (strain SARG / CCMP1375 / SS120) protein is Glycine dehydrogenase (decarboxylating).